The sequence spans 530 residues: Zinc finger protein ZIC 4 (530 aa).

Composition is skewed to basic residues over residues 31–40 (HHPHHHHHPP) and 97–113 (NPHH…HHMA). 2 disordered regions span residues 31 to 50 (HHPH…TGYP) and 87 to 138 (PGAL…SYSS). Residues 284–317 (LICKWIEEDQLPKKLCSKTFSTMHELVTHVTVEH) form a C2H2-type 1; atypical zinc finger. The C2H2-type 2; atypical zinc-finger motif lies at 326–353 (HICFWEECPREGKPFKAKYKLVNHIRVH). C2H2-type zinc fingers lie at residues 359–383 (FPCP…KRTH), 389–413 (FKCE…SHVH), and 419–443 (YNCK…MKVH). The disordered stretch occupies residues 432–530 (HPSSLRKHMK…YSNWQATNTF (99 aa)). A compositionally biased stretch (basic residues) spans 435-444 (SLRKHMKVHC). Low complexity-rich tracts occupy residues 455-467 (SSIP…SSDS) and 474-485 (TSSQPEPPTSSQ). Residues 520–530 (SYSNWQATNTF) show a composition bias toward polar residues.

The protein belongs to the GLI C2H2-type zinc-finger protein family. At mid-gastrula stage (stage 11.5), weakly expressed in the prospective neural fold. Expressed in the neural plate border region at early neurula stage (stage 15) with strongest expression in the prospective regions of the hyoid and branchial crests. Expression in the dorsal central nervous system (CNS) continues through late neurula stage and early tail bud stages with expression strongest in the olfactory placode and expression levels increasing as development progresses. Becomes expressed in somites.

The protein resides in the nucleus. In terms of biological role, may bind to DNA. Induces neural and neural crest differentiation. Does not induce anterior neural tissue. This is Zinc finger protein ZIC 4 (zic4) from Xenopus laevis (African clawed frog).